Reading from the N-terminus, the 393-residue chain is O-phospho-L-seryl-tRNA:Cys-tRNA synthase 1 (393 aa).

Residues 85–86, Asn190, and 213–215 each bind pyridoxal 5'-phosphate; these read AR and SGH. Lys216 carries the N6-(pyridoxal phosphate)lysine modification.

This sequence belongs to the SepCysS family. As to quaternary structure, homodimer. Interacts with SepRS. Pyridoxal 5'-phosphate serves as cofactor.

The catalysed reaction is O-phospho-L-seryl-tRNA(Cys) + hydrogen sulfide + H(+) = L-cysteinyl-tRNA(Cys) + phosphate. Converts O-phospho-L-seryl-tRNA(Cys) (Sep-tRNA(Cys)) to L-cysteinyl-tRNA(Cys) (Cys-tRNA(Cys)). The protein is O-phospho-L-seryl-tRNA:Cys-tRNA synthase 1 of Methanospirillum hungatei JF-1 (strain ATCC 27890 / DSM 864 / NBRC 100397 / JF-1).